A 276-amino-acid chain; its full sequence is Natural cytotoxicity triggering receptor 2 (276 aa).

The signal sequence occupies residues 1-21 (MAWRALHPLLLLLLLFPGSQA). One can recognise an Ig-like domain in the interval 22-120 (QSKAQVLQSV…IYRPSDNSVS (99 aa)). The Extracellular segment spans residues 22–192 (QSKAQVLQSV…LRPGPAAPIA (171 aa)). Cystine bridges form between Cys-40–Cys-109 and Cys-55–Cys-63. Composition is skewed to polar residues over residues 138-156 (TSWT…QSCV) and 167-183 (ESPS…NSTL). The interval 138 to 184 (TSWTPRDLVSSQTQTQSCVPPTAGARQAPESPSTIPVPSQPQNSTLR) is disordered. Residue Asn-180 is glycosylated (N-linked (GlcNAc...) asparagine). A helical membrane pass occupies residues 193-213 (LVPVFCGLLVAKSLVLSALLV). Over 214–276 (WWGDIWWKTM…ISDDDDEHTL (63 aa)) the chain is Cytoplasmic.

This sequence belongs to the natural cytotoxicity receptor (NCR) family. As to quaternary structure, interacts with TYROBP/DAP12. Interacts with KMT2E isoform NKp44L. Selectively expressed by activated NK cells and by in vitro cultured (i.e. activated) TCRg/d lymphoid cells.

It localises to the cell membrane. Functionally, cytotoxicity-activating receptor that may contribute to the increased efficiency of activated natural killer (NK) cells to mediate tumor cell lysis. This chain is Natural cytotoxicity triggering receptor 2 (NCR2), found in Homo sapiens (Human).